Consider the following 589-residue polypeptide: uncharacterized protein (589 aa).

The region spanning 242–314 (TALEVRNIPE…RFIKIFWYNP (73 aa)) is the RRM domain. Disordered regions lie at residues 322 to 348 (PKKF…VDPA), 443 to 465 (ESPA…RGTN), and 566 to 589 (TSME…GRWR). S330 carries the phosphoserine modification. Positions 330-340 (SPTTSDSSNVE) are enriched in low complexity. At T332 the chain carries Phosphothreonine. S334 carries the phosphoserine modification. Residues 566 to 579 (TSMETGESNTSDNM) are compositionally biased toward polar residues.

It is found in the nucleus. This is an uncharacterized protein from Schizosaccharomyces pombe (strain 972 / ATCC 24843) (Fission yeast).